Reading from the N-terminus, the 371-residue chain is Tetraacyldisaccharide 4'-kinase (371 aa).

63 to 70 (AVGGAGKT) lines the ATP pocket.

This sequence belongs to the LpxK family.

The enzyme catalyses a lipid A disaccharide + ATP = a lipid IVA + ADP + H(+). It participates in glycolipid biosynthesis; lipid IV(A) biosynthesis; lipid IV(A) from (3R)-3-hydroxytetradecanoyl-[acyl-carrier-protein] and UDP-N-acetyl-alpha-D-glucosamine: step 6/6. Transfers the gamma-phosphate of ATP to the 4'-position of a tetraacyldisaccharide 1-phosphate intermediate (termed DS-1-P) to form tetraacyldisaccharide 1,4'-bis-phosphate (lipid IVA). This chain is Tetraacyldisaccharide 4'-kinase, found in Anaeromyxobacter sp. (strain Fw109-5).